We begin with the raw amino-acid sequence, 141 residues long: NADPH-dependent 7-cyano-7-deazaguanine reductase (141 aa).

Catalysis depends on Cys34, which acts as the Thioimide intermediate. Asp41 serves as the catalytic Proton donor. Residues 56 to 58 (VEL) and 75 to 76 (HE) each bind substrate.

Belongs to the GTP cyclohydrolase I family. QueF type 1 subfamily.

It localises to the cytoplasm. The catalysed reaction is 7-aminomethyl-7-carbaguanine + 2 NADP(+) = 7-cyano-7-deazaguanine + 2 NADPH + 3 H(+). It functions in the pathway tRNA modification; tRNA-queuosine biosynthesis. In terms of biological role, catalyzes the NADPH-dependent reduction of 7-cyano-7-deazaguanine (preQ0) to 7-aminomethyl-7-deazaguanine (preQ1). This Acidithiobacillus ferrooxidans (strain ATCC 23270 / DSM 14882 / CIP 104768 / NCIMB 8455) (Ferrobacillus ferrooxidans (strain ATCC 23270)) protein is NADPH-dependent 7-cyano-7-deazaguanine reductase.